A 333-amino-acid polypeptide reads, in one-letter code: Lipoyl synthase (333 aa).

The segment covering 1 to 15 (MSTLVESPVPSNDSQ) has biased composition (polar residues). Residues 1 to 34 (MSTLVESPVPSNDSQAAAPAAYDPTQKQKSQAKT) form a disordered region. Residues cysteine 80, cysteine 85, cysteine 91, cysteine 106, cysteine 110, cysteine 113, and serine 320 each coordinate [4Fe-4S] cluster. Residues 91-309 (CFGKGTATFM…EREAYAMGFT (219 aa)) enclose the Radical SAM core domain.

The protein belongs to the radical SAM superfamily. Lipoyl synthase family. The cofactor is [4Fe-4S] cluster.

It localises to the cytoplasm. It carries out the reaction [[Fe-S] cluster scaffold protein carrying a second [4Fe-4S](2+) cluster] + N(6)-octanoyl-L-lysyl-[protein] + 2 oxidized [2Fe-2S]-[ferredoxin] + 2 S-adenosyl-L-methionine + 4 H(+) = [[Fe-S] cluster scaffold protein] + N(6)-[(R)-dihydrolipoyl]-L-lysyl-[protein] + 4 Fe(3+) + 2 hydrogen sulfide + 2 5'-deoxyadenosine + 2 L-methionine + 2 reduced [2Fe-2S]-[ferredoxin]. Its pathway is protein modification; protein lipoylation via endogenous pathway; protein N(6)-(lipoyl)lysine from octanoyl-[acyl-carrier-protein]: step 2/2. Its function is as follows. Catalyzes the radical-mediated insertion of two sulfur atoms into the C-6 and C-8 positions of the octanoyl moiety bound to the lipoyl domains of lipoate-dependent enzymes, thereby converting the octanoylated domains into lipoylated derivatives. This Bordetella bronchiseptica (strain ATCC BAA-588 / NCTC 13252 / RB50) (Alcaligenes bronchisepticus) protein is Lipoyl synthase.